The primary structure comprises 131 residues: Small ribosomal subunit protein uS8 (131 aa).

The protein belongs to the universal ribosomal protein uS8 family. In terms of assembly, part of the 30S ribosomal subunit. Contacts proteins S5 and S12.

Its function is as follows. One of the primary rRNA binding proteins, it binds directly to 16S rRNA central domain where it helps coordinate assembly of the platform of the 30S subunit. The chain is Small ribosomal subunit protein uS8 from Phocaeicola vulgatus (strain ATCC 8482 / DSM 1447 / JCM 5826 / CCUG 4940 / NBRC 14291 / NCTC 11154) (Bacteroides vulgatus).